Consider the following 127-residue polypeptide: Gamma-synuclein (127 aa).

Repeat copies occupy residues 20–30 (EKTKQGVTEAA) and 31–41 (EKTKEGVMYVG). The interval 20 to 67 (EKTKQGVTEAAEKTKEGVMYVGAKTKENVVQSVTSVAEKTKEQANAVS) is 4 X 11 AA tandem repeats of [EGSA]-K-T-K-[EQ]-[GQ]-V-X(4). A 3; approximate repeat occupies 42 to 56 (AKTKENVVQSVTSVA). Repeat unit 4 spans residues 57–67 (EKTKEQANAVS). 2 positions are modified to phosphoserine: Ser67 and Ser72. The segment at 96-127 (RKEDLRPSAPQQEGEASKEKEEVAEEAQSGGD) is disordered. Ser124 is modified (phosphoserine; by BARK1, CaMK2 and CK2).

This sequence belongs to the synuclein family. May be a centrosome-associated protein. Interacts with MYOC; affects its secretion and its aggregation. Post-translationally, phosphorylated. Phosphorylation by GRK5 appears to occur on residues distinct from the residue phosphorylated by other kinases. As to expression, highly expressed in brain, particularly in the substantia nigra. Also expressed in the corpus callosum, heart, skeletal muscle, ovary, testis, colon and spleen. Weak expression in pancreas, kidney and lung.

Its subcellular location is the cytoplasm. The protein resides in the perinuclear region. It is found in the cytoskeleton. The protein localises to the microtubule organizing center. It localises to the centrosome. Its subcellular location is the spindle. Its function is as follows. Plays a role in neurofilament network integrity. May be involved in modulating axonal architecture during development and in the adult. In vitro, increases the susceptibility of neurofilament-H to calcium-dependent proteases. May also function in modulating the keratin network in skin. Activates the MAPK and Elk-1 signal transduction pathway. This Homo sapiens (Human) protein is Gamma-synuclein (SNCG).